Here is a 161-residue protein sequence, read N- to C-terminus: UPF0262 protein Meso_0189 (161 aa).

It belongs to the UPF0262 family.

The protein is UPF0262 protein Meso_0189 of Chelativorans sp. (strain BNC1).